The chain runs to 218 residues: MGQKINPIGFRLGTTQGHHSLWFAQPKNYSEGLQEDQKIRNYIKNYVQKNMKTSSGVEGIARIEIQKRIDLIQIIIYMGFPKILIESRPRGIEELQMNLQKEFNSVNRKLNIAITRIEKPYGNPNILAEFIAGQLKNRVSFRKAMKKAIELTEQADTKGIQVQIAGRIDGKEIARVEWIREGRVPLQTIRAKIDYCSYTVRTIYGVLGIKIWIFIEGE.

Residues 47-118 (VQKNMKTSSG…KLNIAITRIE (72 aa)) enclose the KH type-2 domain.

This sequence belongs to the universal ribosomal protein uS3 family. Part of the 30S ribosomal subunit.

It is found in the plastid. The protein localises to the chloroplast. In Helianthus annuus (Common sunflower), this protein is Small ribosomal subunit protein uS3c (rps3).